Consider the following 874-residue polypeptide: Bifunctional uridylyltransferase/uridylyl-removing enzyme (874 aa).

The uridylyltransferase stretch occupies residues 1–336 (MIDTSTITNP…DNGKTVETIQ (336 aa)). The segment at 337–695 (LSDDFQIRGH…LSKKATRGGT (359 aa)) is uridylyl-removing. One can recognise an HD domain in the interval 455–577 (VDEHSVRLIK…VRDEERLDYL (123 aa)). ACT domains are found at residues 696 to 779 (EVFV…RAPR) and 802 to 874 (TMEL…TPQD).

It belongs to the GlnD family. Mg(2+) is required as a cofactor.

The enzyme catalyses [protein-PII]-L-tyrosine + UTP = [protein-PII]-uridylyl-L-tyrosine + diphosphate. It carries out the reaction [protein-PII]-uridylyl-L-tyrosine + H2O = [protein-PII]-L-tyrosine + UMP + H(+). Uridylyltransferase (UTase) activity is inhibited by glutamine, while glutamine activates uridylyl-removing (UR) activity. Its function is as follows. Modifies, by uridylylation and deuridylylation, the PII regulatory proteins (GlnB and homologs), in response to the nitrogen status of the cell that GlnD senses through the glutamine level. Under low glutamine levels, catalyzes the conversion of the PII proteins and UTP to PII-UMP and PPi, while under higher glutamine levels, GlnD hydrolyzes PII-UMP to PII and UMP (deuridylylation). Thus, controls uridylylation state and activity of the PII proteins, and plays an important role in the regulation of nitrogen assimilation and metabolism. This Photobacterium profundum (strain SS9) protein is Bifunctional uridylyltransferase/uridylyl-removing enzyme.